We begin with the raw amino-acid sequence, 476 residues long: Membrane-bound lytic murein transglycosylase F (476 aa).

An N-terminal signal peptide occupies residues 1–16 (MIKTLFIILLCGILSA). Residues 17–259 (CQPVDIQDVD…HLNEKYFGHV (243 aa)) are non-LT domain. The tract at residues 260–476 (KRFDYVDTRA…VPAKSHVSAQ (217 aa)) is LT domain. Glutamate 304 is a catalytic residue.

This sequence in the N-terminal section; belongs to the bacterial solute-binding protein 3 family. It in the C-terminal section; belongs to the transglycosylase Slt family.

The protein localises to the cell outer membrane. It carries out the reaction Exolytic cleavage of the (1-&gt;4)-beta-glycosidic linkage between N-acetylmuramic acid (MurNAc) and N-acetylglucosamine (GlcNAc) residues in peptidoglycan, from either the reducing or the non-reducing ends of the peptidoglycan chains, with concomitant formation of a 1,6-anhydrobond in the MurNAc residue.. Murein-degrading enzyme that degrades murein glycan strands and insoluble, high-molecular weight murein sacculi, with the concomitant formation of a 1,6-anhydromuramoyl product. Lytic transglycosylases (LTs) play an integral role in the metabolism of the peptidoglycan (PG) sacculus. Their lytic action creates space within the PG sacculus to allow for its expansion as well as for the insertion of various structures such as secretion systems and flagella. This is Membrane-bound lytic murein transglycosylase F from Shewanella frigidimarina (strain NCIMB 400).